We begin with the raw amino-acid sequence, 309 residues long: MELQFLGTGAGQPAKQRNVSSLVLKLLDEINEVWMFDCGEGTQRQILETSIKPRKIQKIFITHLHGDHIFGLPGFLSSRAFQASEEQTDIEIFGPLGIKSFVQNSLAISGTRLPYKIHFHEFTDKDMGKIMETDKFLVYAEKLAHTIFCMGYRVVQKDLEGTLDAEALKKAGVPFGPLFGKIKNGQDIVLDDGRQILAKDYISEPKKGKVITILGDTRKTPASQRLALNADVLVHESTYGKGDDRIARNHGHSTNMQAAQIAKDANVKRLLLNHVSARFLSRDCRQMEKDAASLFENVKIVKDLEEVTI.

Residues His-63, His-65, Asp-67, His-68, His-145, Asp-216, and His-274 each coordinate Zn(2+). Asp-67 functions as the Proton acceptor in the catalytic mechanism.

The protein belongs to the RNase Z family. Homodimer. Zn(2+) is required as a cofactor.

It carries out the reaction Endonucleolytic cleavage of RNA, removing extra 3' nucleotides from tRNA precursor, generating 3' termini of tRNAs. A 3'-hydroxy group is left at the tRNA terminus and a 5'-phosphoryl group is left at the trailer molecule.. Functionally, zinc phosphodiesterase, which displays some tRNA 3'-processing endonuclease activity. Probably involved in tRNA maturation, by removing a 3'-trailer from precursor tRNA. The sequence is that of Ribonuclease Z from Streptococcus uberis (strain ATCC BAA-854 / 0140J).